The sequence spans 422 residues: Keratin, type I cytoskeletal 23 (422 aa).

Residues 1–13 are compositionally biased toward polar residues; that stretch reads MNSGHSFSQTPSA. Residues 1–71 are head; that stretch reads MNSGHSFSQT…GRSSPLLGGN (71 aa). Residues 1–73 are disordered; that stretch reads MNSGHSFSQT…SSPLLGGNGK (73 aa). The coil 1A stretch occupies residues 72 to 107; it reads GKATMQNLNDRLASYLEKVRALEEANMKLESRILKW. Residues 72–382 form the IF rod domain; sequence GKATMQNLND…RLLEGESEGT (311 aa). Residues 108–125 are linker 1; sequence HQQRDPGSKKDYSQYEEN. The coil 1B stretch occupies residues 126–217; that stretch reads ITHLQEQIVD…KHHEQEMEKH (92 aa). A linker 12 region spans residues 218 to 240; it reads HVPSDFNVNVKVDTGPREDLIKV. The segment at 241-378 is coil 2; the sequence is LEDMRQEYEL…TTYRRLLEGE (138 aa). Residues 379–422 form a rod-like helical tail region; sequence SEGTREESKSSMKVSATPKIKAITQETINGRLVLCQVNEIQKHA.

It belongs to the intermediate filament family. In terms of assembly, heterotetramer of two type I and two type II keratins.

In Homo sapiens (Human), this protein is Keratin, type I cytoskeletal 23 (KRT23).